Reading from the N-terminus, the 329-residue chain is MTDLTATPAPAEPAASAYDPTAKQKAQAKTARIPIKIVPIEKLKKPEWIRVKAATSSSRFNEIKTILREHNLHTVCEEASCPNIGECFGKGTATFMIMGDKCTRRCPFCDVGHGRPDPLDADEPKNLARTIAALKLKYVVITSVDRDDLRDGGAGHFVECIREVREQSPATRIEILTPDFRGRLDRALAILNAAPPDVMNHNLETVPRLYKEARPGSDYAHSLKLLKDFKALHPDVATKSGLMVGLGETTDEILQVMRDLRAHDVDMLTIGQYLQPSEHHLPVREYVHPDTFKMYEEEAYKMGFTHAAVGAMVRSSYHADLQAHGAGVV.

A disordered region spans residues 1 to 23 (MTDLTATPAPAEPAASAYDPTAK). Positions 76, 81, 87, 102, 106, 109, and 316 each coordinate [4Fe-4S] cluster. One can recognise a Radical SAM core domain in the interval 87–305 (CFGKGTATFM…EEEAYKMGFT (219 aa)).

Belongs to the radical SAM superfamily. Lipoyl synthase family. [4Fe-4S] cluster serves as cofactor.

It is found in the cytoplasm. It catalyses the reaction [[Fe-S] cluster scaffold protein carrying a second [4Fe-4S](2+) cluster] + N(6)-octanoyl-L-lysyl-[protein] + 2 oxidized [2Fe-2S]-[ferredoxin] + 2 S-adenosyl-L-methionine + 4 H(+) = [[Fe-S] cluster scaffold protein] + N(6)-[(R)-dihydrolipoyl]-L-lysyl-[protein] + 4 Fe(3+) + 2 hydrogen sulfide + 2 5'-deoxyadenosine + 2 L-methionine + 2 reduced [2Fe-2S]-[ferredoxin]. The protein operates within protein modification; protein lipoylation via endogenous pathway; protein N(6)-(lipoyl)lysine from octanoyl-[acyl-carrier-protein]: step 2/2. Its function is as follows. Catalyzes the radical-mediated insertion of two sulfur atoms into the C-6 and C-8 positions of the octanoyl moiety bound to the lipoyl domains of lipoate-dependent enzymes, thereby converting the octanoylated domains into lipoylated derivatives. The protein is Lipoyl synthase of Burkholderia mallei (strain NCTC 10247).